We begin with the raw amino-acid sequence, 340 residues long: MAEGGELMSRLLSENADLKKQVRLLKENQMLRRLLSQSCQEGGGHDLLPPRAHAYPEAGSPGSGVPDFGRFTSVADTPSQLQTSSLEDLLCSHAPLSSEDDTSPGCAAPSQAPFKAFLSPPEPHSHRGTDRKLSPLLSPLQDSLVDKTLLEPREMVRPKKVCFSESSLPTGDRTRRSYYLNEIQSFAGAEKDARVVGEIAFQLDRRILAYVFPGVTRLYGFTVANIPEKIEQTSTKSLDGSVDERKLRELTQRYLALSARLEKLGYSRDVHPAFSEFLINTYGILKQRPDLRANPLHSSPAALRKLVIDVVPPKFLGDSLLLLNCLCELSKEDGKPLFAW.

Disordered stretches follow at residues glycine 42 to serine 73 and alanine 94 to proline 135. The residue at position 60 (serine 60) is a Phosphoserine. The segment covering proline 123–leucine 133 has biased composition (basic and acidic residues). Position 134 is a phosphoserine (serine 134).

The protein belongs to the speriolin family.

It localises to the cytoplasm. The chain is Speriolin-like protein (SPATC1L) from Homo sapiens (Human).